We begin with the raw amino-acid sequence, 97 residues long: Citrate lyase acyl carrier protein (97 aa).

S14 is modified (O-(phosphoribosyl dephospho-coenzyme A)serine).

It belongs to the CitD family. As to quaternary structure, oligomer with a subunit composition of (alpha,beta,gamma)6.

It localises to the cytoplasm. Covalent carrier of the coenzyme of citrate lyase. The chain is Citrate lyase acyl carrier protein from Enterobacter sp. (strain 638).